A 431-amino-acid chain; its full sequence is 3-phosphoshikimate 1-carboxyvinyltransferase (431 aa).

3 residues coordinate 3-phosphoshikimate: Lys-22, Ser-23, and Arg-27. A phosphoenolpyruvate-binding site is contributed by Lys-22. Residues Gly-94 and Arg-122 each contribute to the phosphoenolpyruvate site. Residues Ser-168, Ser-169, Gln-170, Ser-196, Asp-315, and Lys-342 each coordinate 3-phosphoshikimate. Gln-170 is a binding site for phosphoenolpyruvate. Asp-315 functions as the Proton acceptor in the catalytic mechanism. Phosphoenolpyruvate is bound by residues Arg-346, Arg-390, and Lys-414.

This sequence belongs to the EPSP synthase family. In terms of assembly, monomer.

Its subcellular location is the cytoplasm. It catalyses the reaction 3-phosphoshikimate + phosphoenolpyruvate = 5-O-(1-carboxyvinyl)-3-phosphoshikimate + phosphate. It participates in metabolic intermediate biosynthesis; chorismate biosynthesis; chorismate from D-erythrose 4-phosphate and phosphoenolpyruvate: step 6/7. Functionally, catalyzes the transfer of the enolpyruvyl moiety of phosphoenolpyruvate (PEP) to the 5-hydroxyl of shikimate-3-phosphate (S3P) to produce enolpyruvyl shikimate-3-phosphate and inorganic phosphate. The protein is 3-phosphoshikimate 1-carboxyvinyltransferase of Nitrosomonas europaea (strain ATCC 19718 / CIP 103999 / KCTC 2705 / NBRC 14298).